Here is a 304-residue protein sequence, read N- to C-terminus: Homoserine kinase (304 aa).

Residue 90 to 100 (PLARGLGSSAS) coordinates ATP.

The protein belongs to the GHMP kinase family. Homoserine kinase subfamily.

The protein localises to the cytoplasm. The catalysed reaction is L-homoserine + ATP = O-phospho-L-homoserine + ADP + H(+). It functions in the pathway amino-acid biosynthesis; L-threonine biosynthesis; L-threonine from L-aspartate: step 4/5. Its function is as follows. Catalyzes the ATP-dependent phosphorylation of L-homoserine to L-homoserine phosphate. The chain is Homoserine kinase from Staphylococcus aureus (strain JH9).